A 384-amino-acid chain; its full sequence is FAD-dependent urate hydroxylase (384 aa).

FAD contacts are provided by residues Gly-11, 30 to 31 (EA), Ser-43, and Val-125. Substrate contacts are provided by residues Asn-178, Arg-204, and 216–218 (YFF). Residues Asp-285 and 295–299 (GQGGC) each bind FAD.

The protein belongs to the FAD-dependent urate hydroxylase family. The cofactor is FAD.

The catalysed reaction is urate + NADH + O2 + H(+) = 5-hydroxyisourate + NAD(+) + H2O. Its pathway is purine metabolism; urate degradation. Catalyzes the hydroxylation of uric acid to 5-hydroxyisourate. This is FAD-dependent urate hydroxylase (hpxO) from Klebsiella pneumoniae.